We begin with the raw amino-acid sequence, 238 residues long: LexA repressor (238 aa).

Positions F26–T46 form a DNA-binding region, H-T-H motif. Catalysis depends on for autocatalytic cleavage activity residues S158 and K196.

It belongs to the peptidase S24 family. In terms of assembly, homodimer.

The enzyme catalyses Hydrolysis of Ala-|-Gly bond in repressor LexA.. Its function is as follows. Represses a number of genes involved in the response to DNA damage (SOS response), including recA and lexA. In the presence of single-stranded DNA, RecA interacts with LexA causing an autocatalytic cleavage which disrupts the DNA-binding part of LexA, leading to derepression of the SOS regulon and eventually DNA repair. The protein is LexA repressor of Sinorhizobium medicae (strain WSM419) (Ensifer medicae).